A 349-amino-acid polypeptide reads, in one-letter code: Aspartate carbamoyltransferase catalytic subunit (349 aa).

Arg59 and Thr60 together coordinate carbamoyl phosphate. Lys87 is a binding site for L-aspartate. Residues Arg109, His142, and Gln145 each contribute to the carbamoyl phosphate site. Positions 182 and 253 each coordinate L-aspartate. Residues Gly294 and Pro295 each coordinate carbamoyl phosphate.

It belongs to the aspartate/ornithine carbamoyltransferase superfamily. ATCase family. Heterododecamer (2C3:3R2) of six catalytic PyrB chains organized as two trimers (C3), and six regulatory PyrI chains organized as three dimers (R2).

It catalyses the reaction carbamoyl phosphate + L-aspartate = N-carbamoyl-L-aspartate + phosphate + H(+). It functions in the pathway pyrimidine metabolism; UMP biosynthesis via de novo pathway; (S)-dihydroorotate from bicarbonate: step 2/3. Catalyzes the condensation of carbamoyl phosphate and aspartate to form carbamoyl aspartate and inorganic phosphate, the committed step in the de novo pyrimidine nucleotide biosynthesis pathway. This Synechococcus sp. (strain CC9605) protein is Aspartate carbamoyltransferase catalytic subunit.